The following is a 747-amino-acid chain: Phosphoribosylformylglycinamidine synthase subunit PurL (747 aa).

His46 is a catalytic residue. ATP contacts are provided by Tyr49 and Lys88. Glu90 provides a ligand contact to Mg(2+). Residues 91-94 (SHNH) and Arg113 contribute to the substrate site. Residue His92 is the Proton acceptor of the active site. Asp114 is a Mg(2+) binding site. Residue Gln237 participates in substrate binding. Asp265 provides a ligand contact to Mg(2+). Residue 309–311 (ESQ) coordinates substrate. Residues Asp493 and Gly530 each contribute to the ATP site. Asn531 contributes to the Mg(2+) binding site. Residue Ser533 participates in substrate binding.

This sequence belongs to the FGAMS family. In terms of assembly, monomer. Part of the FGAM synthase complex composed of 1 PurL, 1 PurQ and 2 PurS subunits.

The protein localises to the cytoplasm. The catalysed reaction is N(2)-formyl-N(1)-(5-phospho-beta-D-ribosyl)glycinamide + L-glutamine + ATP + H2O = 2-formamido-N(1)-(5-O-phospho-beta-D-ribosyl)acetamidine + L-glutamate + ADP + phosphate + H(+). It functions in the pathway purine metabolism; IMP biosynthesis via de novo pathway; 5-amino-1-(5-phospho-D-ribosyl)imidazole from N(2)-formyl-N(1)-(5-phospho-D-ribosyl)glycinamide: step 1/2. In terms of biological role, part of the phosphoribosylformylglycinamidine synthase complex involved in the purines biosynthetic pathway. Catalyzes the ATP-dependent conversion of formylglycinamide ribonucleotide (FGAR) and glutamine to yield formylglycinamidine ribonucleotide (FGAM) and glutamate. The FGAM synthase complex is composed of three subunits. PurQ produces an ammonia molecule by converting glutamine to glutamate. PurL transfers the ammonia molecule to FGAR to form FGAM in an ATP-dependent manner. PurS interacts with PurQ and PurL and is thought to assist in the transfer of the ammonia molecule from PurQ to PurL. In Deinococcus radiodurans (strain ATCC 13939 / DSM 20539 / JCM 16871 / CCUG 27074 / LMG 4051 / NBRC 15346 / NCIMB 9279 / VKM B-1422 / R1), this protein is Phosphoribosylformylglycinamidine synthase subunit PurL.